A 505-amino-acid polypeptide reads, in one-letter code: Probable Xaa-Pro aminopeptidase Pc16g13390 (505 aa).

Positions 287, 298, 436, and 475 each coordinate Mn(2+).

Belongs to the peptidase M24B family. Mn(2+) serves as cofactor.

It carries out the reaction Release of any N-terminal amino acid, including proline, that is linked to proline, even from a dipeptide or tripeptide.. Functionally, catalyzes the removal of a penultimate prolyl residue from the N-termini of peptides. This is Probable Xaa-Pro aminopeptidase Pc16g13390 from Penicillium rubens (strain ATCC 28089 / DSM 1075 / NRRL 1951 / Wisconsin 54-1255) (Penicillium chrysogenum).